Consider the following 428-residue polypeptide: GTPase Obg (428 aa).

The Obg domain occupies M1–L158. The OBG-type G domain maps to A159–E329. Residues G165 to S172, F190 to V194, D212 to G215, N282 to D285, and S310 to V312 each bind GTP. The Mg(2+) site is built by S172 and T192. Positions K350–D428 constitute an OCT domain.

Belongs to the TRAFAC class OBG-HflX-like GTPase superfamily. OBG GTPase family. In terms of assembly, monomer. Mg(2+) serves as cofactor.

Its subcellular location is the cytoplasm. Functionally, an essential GTPase which binds GTP, GDP and possibly (p)ppGpp with moderate affinity, with high nucleotide exchange rates and a fairly low GTP hydrolysis rate. Plays a role in control of the cell cycle, stress response, ribosome biogenesis and in those bacteria that undergo differentiation, in morphogenesis control. The chain is GTPase Obg from Bacillus cereus (strain ATCC 14579 / DSM 31 / CCUG 7414 / JCM 2152 / NBRC 15305 / NCIMB 9373 / NCTC 2599 / NRRL B-3711).